A 388-amino-acid polypeptide reads, in one-letter code: Probable aspartic-type endopeptidase MCYG_06955 (388 aa).

Residues 1–21 (MMGPFFYFTAYVSLLFAFTQA) form the signal peptide. Residues asparagine 82 and asparagine 104 are each glycosylated (N-linked (GlcNAc...) asparagine). The 289-residue stretch at 96-384 (FVNEITVGND…DYDGPKIGFA (289 aa)) folds into the Peptidase A1 domain. Aspartate 112 is a catalytic residue. Residues asparagine 209 and asparagine 261 are each glycosylated (N-linked (GlcNAc...) asparagine). The active site involves aspartate 278. Asparagine 315 and asparagine 320 each carry an N-linked (GlcNAc...) asparagine glycan.

This sequence belongs to the peptidase A1 family.

The protein localises to the secreted. Its function is as follows. Probable aspartic-type endopeptidase which contributes to virulence. The chain is Probable aspartic-type endopeptidase MCYG_06955 from Arthroderma otae (strain ATCC MYA-4605 / CBS 113480) (Microsporum canis).